The primary structure comprises 636 residues: DNA mismatch repair protein MutL (636 aa).

Positions 362–393 (RKTPEVHEEAEKPEFLVKQEAKNSEEPKNETE) are disordered. The segment covering 363 to 393 (KTPEVHEEAEKPEFLVKQEAKNSEEPKNETE) has biased composition (basic and acidic residues).

This sequence belongs to the DNA mismatch repair MutL/HexB family.

This protein is involved in the repair of mismatches in DNA. It is required for dam-dependent methyl-directed DNA mismatch repair. May act as a 'molecular matchmaker', a protein that promotes the formation of a stable complex between two or more DNA-binding proteins in an ATP-dependent manner without itself being part of a final effector complex. This chain is DNA mismatch repair protein MutL, found in Lactobacillus helveticus (strain DPC 4571).